The primary structure comprises 298 residues: Acetylglutamate kinase (298 aa).

Substrate is bound by residues 69-70 (GG), Arg91, and Asn196.

Belongs to the acetylglutamate kinase family. ArgB subfamily.

Its subcellular location is the cytoplasm. The enzyme catalyses N-acetyl-L-glutamate + ATP = N-acetyl-L-glutamyl 5-phosphate + ADP. It functions in the pathway amino-acid biosynthesis; L-arginine biosynthesis; N(2)-acetyl-L-ornithine from L-glutamate: step 2/4. Catalyzes the ATP-dependent phosphorylation of N-acetyl-L-glutamate. This is Acetylglutamate kinase from Rhodopseudomonas palustris (strain BisA53).